The chain runs to 283 residues: Gap junction beta-1 protein (283 aa).

The Cytoplasmic portion of the chain corresponds to 1–22; sequence MNWTGLYTLLSGVNRHSTAIGR. The helical transmembrane segment at 23 to 45 threads the bilayer; the sequence is VWLSVIFIFRIMVLVVAAESVWG. Residues 46–75 are Extracellular-facing; the sequence is DEKSSFICNTLQPGCNSVCYDQFFPISHVR. Residues 76-95 form a helical membrane-spanning segment; that stretch reads LWSLQLILVSTPALLVAMHV. Residues 96-130 are Cytoplasmic-facing; sequence AHQQHIEKKMLRLEGHGDPLHLEEVKRHKVHISGT. Residues 131–153 form a helical membrane-spanning segment; the sequence is LWWAYVISVVFRLLFEAVFMYVF. Residues 154-191 lie on the Extracellular side of the membrane; the sequence is YLLYPGYAMVRLVKCDVYPCPNTVDCFVSRPTEKTVFT. Residues 192–214 traverse the membrane as a helical segment; it reads VFMLAASGICIILNVAEVVYLII. Residues 215 to 283 lie on the Cytoplasmic side of the membrane; sequence RACARRAQRR…AEKSDRCSAC (69 aa). Residues serine 233, serine 258, serine 266, and serine 277 each carry the phosphoserine modification.

This sequence belongs to the connexin family. Beta-type (group I) subfamily. In terms of assembly, a connexon is composed of a hexamer of connexins. Interacts with CNST.

Its subcellular location is the cell membrane. The protein localises to the cell junction. It localises to the gap junction. In terms of biological role, one gap junction consists of a cluster of closely packed pairs of transmembrane channels, the connexons, through which materials of low MW diffuse from one cell to a neighboring cell. The sequence is that of Gap junction beta-1 protein (GJB1) from Macaca fascicularis (Crab-eating macaque).